Here is a 379-residue protein sequence, read N- to C-terminus: Alanine racemase (379 aa).

The Proton acceptor; specific for D-alanine role is filled by K41. Position 41 is an N6-(pyridoxal phosphate)lysine (K41). R138 is a binding site for substrate. The Proton acceptor; specific for L-alanine role is filled by Y260. M319 is a binding site for substrate.

This sequence belongs to the alanine racemase family. It depends on pyridoxal 5'-phosphate as a cofactor.

The enzyme catalyses L-alanine = D-alanine. It functions in the pathway amino-acid biosynthesis; D-alanine biosynthesis; D-alanine from L-alanine: step 1/1. Functionally, catalyzes the interconversion of L-alanine and D-alanine. May also act on other amino acids. This is Alanine racemase (alr) from Rhizobium meliloti (strain 1021) (Ensifer meliloti).